The primary structure comprises 398 residues: Elongation factor Tu (398 aa).

The 199-residue stretch at 10 to 208 (KPHVNVGTIG…ALDSHIPEPT (199 aa)) folds into the tr-type G domain. The segment at 19–26 (GHIDHGKT) is G1. GTP is bound at residue 19–26 (GHIDHGKT). Thr-26 serves as a coordination point for Mg(2+). The tract at residues 60 to 64 (TKTVT) is G2. The segment at 83–86 (DCPG) is G3. Residues 83-87 (DCPGH) and 138-141 (NKCD) contribute to the GTP site. Positions 138 to 141 (NKCD) are G4. The interval 176–178 (SSL) is G5.

This sequence belongs to the TRAFAC class translation factor GTPase superfamily. Classic translation factor GTPase family. EF-Tu/EF-1A subfamily. In terms of assembly, monomer.

The protein localises to the cytoplasm. It carries out the reaction GTP + H2O = GDP + phosphate + H(+). GTP hydrolase that promotes the GTP-dependent binding of aminoacyl-tRNA to the A-site of ribosomes during protein biosynthesis. This Rhodopirellula baltica (strain DSM 10527 / NCIMB 13988 / SH1) protein is Elongation factor Tu.